A 437-amino-acid chain; its full sequence is Inactive peptidyl-prolyl cis-trans isomerase shutdown (437 aa).

One can recognise a PPIase FKBP-type domain in the interval 92–178 (DSEVTIHYAA…RPEPALFVIV (87 aa)). TPR repeat units follow at residues 209–242 (VNAL…LRLS), 258–294 (VNAY…EKHC), and 295–327 (KALY…EPKN).

It belongs to the FKBP6 family. As to quaternary structure, interacts with Hsp83.

It is found in the cytoplasm. Functionally, co-chaperone required during oogenesis to repress transposable elements and prevent their mobilization, which is essential for the germline integrity. Acts via the piRNA metabolic process, which mediates the repression of transposable elements during meiosis by forming complexes composed of piRNAs and Piwi proteins and govern the methylation and subsequent repression of transposons. Acts as a co-chaperone via its interaction with Hsp83/HSP90 and is required for the biogenesis of all three piRNA major populations. The sequence is that of Inactive peptidyl-prolyl cis-trans isomerase shutdown (shu) from Bombyx mori (Silk moth).